Reading from the N-terminus, the 167-residue chain is MAGSVNKVILVGNLGADPEIRSLGSGDRVANLRIATSETWRDRSSGERKEKTEWHRVVIFNDNLVKVAEQYLRKGSTVYIEGALQTRKWTDNTGQEKYSTEIVLQKFRGELTMLGGRGGDAGMSSGGGDEYGGGYSGGGSSFGGGQRSQPSGPRESFSADLDDEIPF.

Residues 5-111 (VNKVILVGNL…IVLQKFRGEL (107 aa)) form the SSB domain. A DNA-binding region spans residues 54 to 60 (WHRVVIF). The segment covering 118 to 146 (GGDAGMSSGGGDEYGGGYSGGGSSFGGGQ) has biased composition (gly residues). Residues 118 to 167 (GGDAGMSSGGGDEYGGGYSGGGSSFGGGQRSQPSGPRESFSADLDDEIPF) form a disordered region. Residues 162-167 (DDEIPF) carry the Important for interaction with partner proteins motif.

Homotetramer.

Plays an important role in DNA replication, recombination and repair. Binds to ssDNA and to an array of partner proteins to recruit them to their sites of action during DNA metabolism. The sequence is that of Single-stranded DNA-binding protein (ssb) from Caulobacter vibrioides (strain ATCC 19089 / CIP 103742 / CB 15) (Caulobacter crescentus).